The following is a 405-amino-acid chain: DNA polymerase IV 1 (405 aa).

The UmuC domain occupies 23–203 (IAHIDCDAFY…RPVTTIWGVG (181 aa)). Mg(2+) is bound by residues Asp27 and Asp120. Glu121 is an active-site residue.

The protein belongs to the DNA polymerase type-Y family. Monomer. The cofactor is Mg(2+).

The protein resides in the cytoplasm. It carries out the reaction DNA(n) + a 2'-deoxyribonucleoside 5'-triphosphate = DNA(n+1) + diphosphate. Functionally, poorly processive, error-prone DNA polymerase involved in untargeted mutagenesis. Copies undamaged DNA at stalled replication forks, which arise in vivo from mismatched or misaligned primer ends. These misaligned primers can be extended by PolIV. Exhibits no 3'-5' exonuclease (proofreading) activity. May be involved in translesional synthesis, in conjunction with the beta clamp from PolIII. This Agrobacterium fabrum (strain C58 / ATCC 33970) (Agrobacterium tumefaciens (strain C58)) protein is DNA polymerase IV 1 (dinB1).